We begin with the raw amino-acid sequence, 284 residues long: Diaminopimelate epimerase (284 aa).

Residues Asn13 and Asn66 each coordinate substrate. Residue Cys75 is the Proton donor of the active site. Residues 76 to 77 (GN), Asn166, Asn199, and 217 to 218 (ER) contribute to the substrate site. The active-site Proton acceptor is Cys226. 227–228 (GT) lines the substrate pocket.

This sequence belongs to the diaminopimelate epimerase family. Homodimer.

It localises to the cytoplasm. The enzyme catalyses (2S,6S)-2,6-diaminopimelate = meso-2,6-diaminopimelate. It participates in amino-acid biosynthesis; L-lysine biosynthesis via DAP pathway; DL-2,6-diaminopimelate from LL-2,6-diaminopimelate: step 1/1. Functionally, catalyzes the stereoinversion of LL-2,6-diaminopimelate (L,L-DAP) to meso-diaminopimelate (meso-DAP), a precursor of L-lysine and an essential component of the bacterial peptidoglycan. In Halothermothrix orenii (strain H 168 / OCM 544 / DSM 9562), this protein is Diaminopimelate epimerase.